Reading from the N-terminus, the 482-residue chain is tRNA sulfurtransferase (482 aa).

The region spanning 58–160 is the THUMP domain; it reads VEALQELSRV…GNKAYLYSNV (103 aa). ATP-binding positions include 178–179, 203–204, arginine 260, glycine 282, and glutamine 291; these read LF and HY. Cysteine 341 and cysteine 444 are oxidised to a cystine. The region spanning 400–482 is the Rhodanese domain; sequence IPGDSIIIDV…RYRAGLEKTR (83 aa). The active-site Cysteine persulfide intermediate is the cysteine 444.

Belongs to the ThiI family.

The protein localises to the cytoplasm. It catalyses the reaction [ThiI sulfur-carrier protein]-S-sulfanyl-L-cysteine + a uridine in tRNA + 2 reduced [2Fe-2S]-[ferredoxin] + ATP + H(+) = [ThiI sulfur-carrier protein]-L-cysteine + a 4-thiouridine in tRNA + 2 oxidized [2Fe-2S]-[ferredoxin] + AMP + diphosphate. It carries out the reaction [ThiS sulfur-carrier protein]-C-terminal Gly-Gly-AMP + S-sulfanyl-L-cysteinyl-[cysteine desulfurase] + AH2 = [ThiS sulfur-carrier protein]-C-terminal-Gly-aminoethanethioate + L-cysteinyl-[cysteine desulfurase] + A + AMP + 2 H(+). The protein operates within cofactor biosynthesis; thiamine diphosphate biosynthesis. Catalyzes the ATP-dependent transfer of a sulfur to tRNA to produce 4-thiouridine in position 8 of tRNAs, which functions as a near-UV photosensor. Also catalyzes the transfer of sulfur to the sulfur carrier protein ThiS, forming ThiS-thiocarboxylate. This is a step in the synthesis of thiazole, in the thiamine biosynthesis pathway. The sulfur is donated as persulfide by IscS. The polypeptide is tRNA sulfurtransferase (Desulfurococcus amylolyticus (strain DSM 18924 / JCM 16383 / VKM B-2413 / 1221n) (Desulfurococcus kamchatkensis)).